A 262-amino-acid chain; its full sequence is uncharacterized protein (262 aa).

Belongs to the AB hydrolase superfamily. AB hydrolase 2 family.

This is an uncharacterized protein from Mycosarcoma maydis (Corn smut fungus).